A 554-amino-acid polypeptide reads, in one-letter code: Trimethyltridecatetraene synthase (554 aa).

A helical transmembrane segment spans residues 1 to 21; the sequence is MSAAVALAVILAVYVVLRYIS. A heme-binding site is contributed by Cys-464.

Belongs to the cytochrome P450 family. Requires heme as cofactor.

It is found in the membrane. The enzyme catalyses (6E,10E)-geranyllinalool + reduced [NADPH--hemoprotein reductase] + O2 = (3E,7E)-4,8,12-trimethyltrideca 1,3,7,11-tetraene + but-3-en-2-one + oxidized [NADPH--hemoprotein reductase] + 2 H2O + H(+). It functions in the pathway secondary metabolite biosynthesis; terpenoid biosynthesis. Component of the volatile terpenes biosynthesis pathways. Converts mainly geranyllinalool to trimethyltridecatetraene (TMTT). This Zea mays (Maize) protein is Trimethyltridecatetraene synthase.